We begin with the raw amino-acid sequence, 151 residues long: Large ribosomal subunit protein bL9 (151 aa).

This sequence belongs to the bacterial ribosomal protein bL9 family.

In terms of biological role, binds to the 23S rRNA. In Francisella philomiragia subsp. philomiragia (strain ATCC 25017 / CCUG 19701 / FSC 153 / O#319-036), this protein is Large ribosomal subunit protein bL9.